A 275-amino-acid polypeptide reads, in one-letter code: 3-methyl-2-oxobutanoate hydroxymethyltransferase (275 aa).

Mg(2+)-binding residues include aspartate 44 and aspartate 83. 3-methyl-2-oxobutanoate contacts are provided by residues 44–45, aspartate 83, and lysine 113; that span reads DS. Position 115 (glutamate 115) interacts with Mg(2+). Catalysis depends on glutamate 182, which acts as the Proton acceptor.

Belongs to the PanB family. As to quaternary structure, homodecamer; pentamer of dimers. It depends on Mg(2+) as a cofactor.

The protein localises to the cytoplasm. The enzyme catalyses 3-methyl-2-oxobutanoate + (6R)-5,10-methylene-5,6,7,8-tetrahydrofolate + H2O = 2-dehydropantoate + (6S)-5,6,7,8-tetrahydrofolate. It participates in cofactor biosynthesis; (R)-pantothenate biosynthesis; (R)-pantoate from 3-methyl-2-oxobutanoate: step 1/2. Functionally, catalyzes the reversible reaction in which hydroxymethyl group from 5,10-methylenetetrahydrofolate is transferred onto alpha-ketoisovalerate to form ketopantoate. In Clostridium beijerinckii (strain ATCC 51743 / NCIMB 8052) (Clostridium acetobutylicum), this protein is 3-methyl-2-oxobutanoate hydroxymethyltransferase.